The following is a 1002-amino-acid chain: UPF0182 protein alr1037 (1002 aa).

The next 9 helical transmembrane spans lie at 7-29 (FRLS…LGAE), 49-71 (RGVL…LALA), 123-145 (LRWL…VHYG), 178-200 (QVFS…LIYS), 202-224 (FFLR…YNWA), 258-280 (LLEL…TYLL), 300-319 (HLYG…YWLS), 339-361 (VVVQ…FYLL), and 382-404 (GAYL…YLIV).

It belongs to the UPF0182 family.

The protein resides in the cell membrane. The sequence is that of UPF0182 protein alr1037 from Nostoc sp. (strain PCC 7120 / SAG 25.82 / UTEX 2576).